A 338-amino-acid polypeptide reads, in one-letter code: uncharacterized protein (338 aa).

Positions 144–321 (HTLPVDVKAV…RAARVGLWAS (178 aa)) constitute a TNase-like domain. Catalysis depends on residues Arg228, Glu236, and Arg270.

This is an uncharacterized protein from Capnoides sempervirens (Rock-harlequin).